We begin with the raw amino-acid sequence, 78 residues long: Probable cytochrome c oxidase subunit 6B (78 aa).

The CHCH domain maps to Thr21–Trp64. Positions Cys24–Cys34 match the Cx9C motif motif. 2 disulfide bridges follow: Cys24–Cys56 and Cys34–Cys45. A Cx10C motif motif is present at residues Cys45 to Cys56.

The protein belongs to the cytochrome c oxidase subunit 6B family. In terms of assembly, component of the cytochrome c oxidase (complex IV, CIV), a multisubunit enzyme composed of a catalytic core of 3 subunits and several supernumerary subunits. The complex exists as a monomer or a dimer and forms supercomplexes (SCs) in the inner mitochondrial membrane with ubiquinol-cytochrome c oxidoreductase (cytochrome b-c1 complex, complex III, CIII).

The protein resides in the mitochondrion inner membrane. The protein operates within energy metabolism; oxidative phosphorylation. In terms of biological role, component of the cytochrome c oxidase, the last enzyme in the mitochondrial electron transport chain which drives oxidative phosphorylation. The respiratory chain contains 3 multisubunit complexes succinate dehydrogenase (complex II, CII), ubiquinol-cytochrome c oxidoreductase (cytochrome b-c1 complex, complex III, CIII) and cytochrome c oxidase (complex IV, CIV), that cooperate to transfer electrons derived from NADH and succinate to molecular oxygen, creating an electrochemical gradient over the inner membrane that drives transmembrane transport and the ATP synthase. Cytochrome c oxidase is the component of the respiratory chain that catalyzes the reduction of oxygen to water. Electrons originating from reduced cytochrome c in the intermembrane space (IMS) are transferred via the dinuclear copper A center (CU(A)) of subunit 2 and heme A of subunit 1 to the active site in subunit 1, a binuclear center (BNC) formed by heme A3 and copper B (CU(B)). The BNC reduces molecular oxygen to 2 water molecules using 4 electrons from cytochrome c in the IMS and 4 protons from the mitochondrial matrix. This is Probable cytochrome c oxidase subunit 6B from Dictyostelium discoideum (Social amoeba).